A 479-amino-acid polypeptide reads, in one-letter code: CBL-interacting serine/threonine-protein kinase 10 (479 aa).

One can recognise a Protein kinase domain in the interval 12–266 (YDVGRLLGQG…IARIRESSWF (255 aa)). Residues 18–26 (LGQGTFAKV) and lysine 41 each bind ATP. Aspartate 134 serves as the catalytic Proton acceptor. The interval 152–181 (DFGLSALADCKRQDGLLHTTCGTPAYVAPE) is activation loop. A Phosphoserine modification is found at serine 156. Threonine 170 bears the Phosphothreonine mark. The tract at residues 286 to 323 (SVEAGTAGTNENGAGPSENGAGPSENGDRVTEENHTDE) is disordered. Over residues 288 to 300 (EAGTAGTNENGAG) the composition is skewed to low complexity. A compositionally biased stretch (basic and acidic residues) spans 311-323 (NGDRVTEENHTDE). Positions 322–346 (DEPTNLNAFDLIALSAGFDLAGLFG) constitute an NAF domain. The segment at 350 to 379 (KRESRFTSQKPASVIISKLEEVAQRLKLSI) is PPI. Residues 456–479 (SQQETEYQQQQQQEQQEQEEPLKF) form a disordered region. Residues 457–470 (QQETEYQQQQQQEQ) show a composition bias toward low complexity.

The protein belongs to the protein kinase superfamily. CAMK Ser/Thr protein kinase family. SNF1 subfamily. In terms of assembly, interacts with CBL4/SOS3. Mn(2+) is required as a cofactor. As to expression, mostly expressed in roots.

The enzyme catalyses L-seryl-[protein] + ATP = O-phospho-L-seryl-[protein] + ADP + H(+). It catalyses the reaction L-threonyl-[protein] + ATP = O-phospho-L-threonyl-[protein] + ADP + H(+). Functionally, CIPK serine-threonine protein kinases interact with CBL proteins. Binding of a CBL protein to the regulatory NAF domain of CIPK protein lead to the activation of the kinase in a calcium-dependent manner. The chain is CBL-interacting serine/threonine-protein kinase 10 (CIPK10) from Arabidopsis thaliana (Mouse-ear cress).